The following is a 72-amino-acid chain: UPF0270 protein YheU (72 aa).

It belongs to the UPF0270 family.

This Salmonella dublin (strain CT_02021853) protein is UPF0270 protein YheU.